Here is a 230-residue protein sequence, read N- to C-terminus: L-aspartate/glutamate-specific racemase (230 aa).

Residues M10, Q52, and 83 to 85 (TNT) each bind substrate. Residue T83 is the Proton donor of the active site. Catalysis depends on C197, which acts as the Proton acceptor. 198–199 (TE) contributes to the substrate binding site.

The protein belongs to the aspartate/glutamate racemases family. In terms of assembly, homodimer.

The enzyme catalyses L-glutamate = D-glutamate. It catalyses the reaction L-aspartate = D-aspartate. In terms of biological role, exhibits racemase activity for both L-glutamate and L-aspartate. The protein is L-aspartate/glutamate-specific racemase of Escherichia coli O157:H7.